We begin with the raw amino-acid sequence, 832 residues long: Valine--tRNA ligase (832 aa).

The 'HIGH' region motif lies at 41–51 (PNVTGKLHLGH). The 'KMSKS' region motif lies at 512 to 516 (KMSKS). An ATP-binding site is contributed by Lys-515. Residues 760 to 831 (FIEISQEQKQ…QIYLEELKWK (72 aa)) are a coiled coil.

It belongs to the class-I aminoacyl-tRNA synthetase family. ValS type 1 subfamily. Monomer.

Its subcellular location is the cytoplasm. It carries out the reaction tRNA(Val) + L-valine + ATP = L-valyl-tRNA(Val) + AMP + diphosphate. Functionally, catalyzes the attachment of valine to tRNA(Val). As ValRS can inadvertently accommodate and process structurally similar amino acids such as threonine, to avoid such errors, it has a 'posttransfer' editing activity that hydrolyzes mischarged Thr-tRNA(Val) in a tRNA-dependent manner. This chain is Valine--tRNA ligase, found in Mycoplasmopsis synoviae (strain 53) (Mycoplasma synoviae).